A 172-amino-acid polypeptide reads, in one-letter code: Envelope protein UL45 (172 aa).

Residues 1 to 27 (MPLRASEHAYRPLGPGTPPVRARLPAA) lie on the Intravirion side of the membrane. Residues 28-48 (AWVGVGTIIGGVVIIAALVLV) form a helical; Signal-anchor for type II membrane protein membrane-spanning segment. The Virion surface portion of the chain corresponds to 49 to 172 (PSRASWALSP…TSTRNALGLP (124 aa)).

Belongs to the herpesviridae HHV-1 UL45 family.

The protein localises to the virion membrane. In terms of biological role, important virulence factor of HSV neurotropism. Seems to be required for glycoprotein B-induced fusion. Dispensable for growth in vitro. The sequence is that of Envelope protein UL45 from Homo sapiens (Human).